Consider the following 555-residue polypeptide: Solute carrier family 22 member 2 (555 aa).

Residues 1 to 21 (MSTVDDILEHIGEFHLFQKQT) lie on the Cytoplasmic side of the membrane. A helical transmembrane segment spans residues 22 to 42 (FFLLALLSGAFTPIYVGIVFL). The Extracellular segment spans residues 43-150 (GFTPDHHCWS…LVCAHSWMLD (108 aa)). Residue asparagine 71 is glycosylated (N-linked (GlcNAc...) asparagine). The helical transmembrane segment at 151–171 (LFQSVVNVGFFIGAMMIGYLA) threads the bilayer. Residues 172–177 (DRFGRK) are Cytoplasmic-facing. Residues 178-198 (FCLLVTILINAISGALMAISP) traverse the membrane as a helical segment. Topologically, residues 199–210 (NYAWMLVFRFLQ) are extracellular. Residues 211–231 (GLVSKAGWLIGYILITEFVGL) traverse the membrane as a helical segment. At 232–238 (GYRRMVG) the chain is on the cytoplasmic side. Residues 239–259 (ICYQIAFTVGLLILAGVAYVI) form a helical membrane-spanning segment. At 260-263 (PNWR) the chain is on the extracellular side. Residues 264–284 (WLQFAVTLPNFCFLLYFWCIP) form a helical membrane-spanning segment. The Proline-rich sequence motif lies at 284–288 (PESPR). At 285–348 (ESPRWLISQN…VRTPQIRKHT (64 aa)) the chain is on the cytoplasmic side. Residues 349–369 (LILMYNWFTSSVLYQGLIMHM) traverse the membrane as a helical segment. Topologically, residues 370 to 375 (GLAGDN) are extracellular. A helical membrane pass occupies residues 376–396 (IYLDFFYSALVEFPAAFIIIL). The Cytoplasmic portion of the chain corresponds to 397–404 (TIDRVGRR). Residues 405–425 (YPWAVSNMVAGAACLASVFIP) traverse the membrane as a helical segment. Over 426-432 (DDLQWLK) the chain is Extracellular. A helical membrane pass occupies residues 433-453 (ITIACLGRMGITMAYEMVCLV). Residues 454 to 464 (NAELYPTYIRN) are Cytoplasmic-facing. The chain crosses the membrane as a helical span at residues 465 to 485 (LGVLVCSSMCDIGGIITPFLV). The Extracellular portion of the chain corresponds to 486 to 494 (YRLTDIWME). The chain crosses the membrane as a helical span at residues 495–515 (FPLVVFAVVGLVAGALVLLLP). Topologically, residues 516 to 555 (ETKGKALPETIEDAENMQRPRKKKEKRIYLQVKQADRPLS) are cytoplasmic.

It belongs to the major facilitator (TC 2.A.1) superfamily. Organic cation transporter (TC 2.A.1.19) family. In terms of processing, tyrosine phosphorylated. As to expression, expressed in the kidney, in the proximal tubules of cortex and of the outer medulla. In brain, highly expressed predominantly in regions located at the brain-cerebrospinal fluid border, in the leptomeninges, in the choroid plexus and in a layer boarding the third ventricle. In brain, also observed in the granular cell layer of the cerebellum and in the granular layer and pyramidal cells of the hippocampus in the CA1-CA3 regions. Expressed in tracheal and bronchial ciliated epithelium in the respiratory tract. Expression is greater in the kidney of male than of female.

The protein resides in the basolateral cell membrane. It is found in the basal cell membrane. Its subcellular location is the apical cell membrane. It carries out the reaction (R)-noradrenaline(out) = (R)-noradrenaline(in). The catalysed reaction is (R)-adrenaline(out) = (R)-adrenaline(in). The enzyme catalyses serotonin(out) = serotonin(in). It catalyses the reaction dopamine(out) = dopamine(in). It carries out the reaction histamine(out) = histamine(in). The catalysed reaction is thiamine(in) = thiamine(out). The enzyme catalyses creatinine(in) = creatinine(out). It catalyses the reaction 1-methylnicotinamide(out) = 1-methylnicotinamide(in). It carries out the reaction guanidine(out) = guanidine(in). The catalysed reaction is choline(out) = choline(in). The enzyme catalyses agmatine(out) = agmatine(in). It catalyses the reaction putrescine(out) = putrescine(in). It carries out the reaction spermidine(in) = spermidine(out). The catalysed reaction is tyramine(in) = tyramine(out). The enzyme catalyses L-histidyl-L-proline diketopiperazine(in) = L-histidyl-L-proline diketopiperazine(out). It catalyses the reaction (R)-salsolinol(in) = (R)-salsolinol(out). It carries out the reaction N-methyl-(R)-salsolinol(in) = N-methyl-(R)-salsolinol(out). The catalysed reaction is acetylcholine(in) = acetylcholine(out). The enzyme catalyses prostaglandin F2alpha(out) = prostaglandin F2alpha(in). It catalyses the reaction prostaglandin E2(out) = prostaglandin E2(in). With respect to regulation, tyrosine phosphorylation of the transporter leads to activation of the transport activity. Inhibited by cGMP, most likely through a cGMP-binding protein that interacts with OCT2. Electrogenic voltage-dependent transporter that mediates the transport of a variety of organic cations such as endogenous bioactive amines, cationic drugs and xenobiotics. Functions as a Na(+)-independent, bidirectional uniporter. Cation cellular uptake or release is driven by the electrochemical potential, i.e. membrane potential and concentration gradient. However, may also engage electroneutral cation exchange when saturating concentrations of cation substrates are reached. Predominantly expressed at the basolateral membrane of hepatocytes and proximal tubules and involved in the uptake and disposition of cationic compounds by hepatic and renal clearance from the blood flow. Implicated in monoamine neurotransmitters uptake such as histamine, dopamine, adrenaline/epinephrine, noradrenaline/norepinephrine, serotonin and tyramine, thereby supporting a physiological role in the central nervous system by regulating interstitial concentrations of neurotransmitters. Also capable of transporting dopaminergic neuromodulators cyclo(his-pro), salsolinol and N-methyl-salsolinol, thereby involved in the maintenance of dopaminergic cell integrity in the central nervous system. Mediates the bidirectional transport of acetylcholine (ACh) at the apical membrane of ciliated cell in airway epithelium, thereby playing a role in luminal release of ACh from bronchial epithelium. Also transports guanidine and endogenous monoamines such as vitamin B1/thiamine, creatinine and N-1-methylnicotinamide (NMN). Mediates the uptake and efflux of quaternary ammonium compound choline. Mediates the bidirectional transport of polyamine agmatine and the uptake of polyamine putrescine. Able to transport non-amine endogenous compounds such as prostaglandin E2 (PGE2) and prostaglandin F2-alpha (PGF2-alpha). Also involved in the uptake of xenobiotic 4-(4-(dimethylamino)styryl)-N-methylpyridinium (ASP). May contribute to regulate the transport of organic compounds in testis across the blood-testis-barrier. This is Solute carrier family 22 member 2 from Rattus norvegicus (Rat).